The sequence spans 593 residues: A-type ATP synthase subunit A (593 aa).

236–243 (GPFGSGKT) serves as a coordination point for ATP.

This sequence belongs to the ATPase alpha/beta chains family. In terms of assembly, has multiple subunits with at least A(3), B(3), C, D, E, F, H, I and proteolipid K(x).

The protein localises to the cell membrane. The catalysed reaction is ATP + H2O + 4 H(+)(in) = ADP + phosphate + 5 H(+)(out). In terms of biological role, component of the A-type ATP synthase that produces ATP from ADP in the presence of a proton gradient across the membrane. The A chain is the catalytic subunit. The chain is A-type ATP synthase subunit A from Pyrobaculum islandicum (strain DSM 4184 / JCM 9189 / GEO3).